A 448-amino-acid chain; its full sequence is Ribulose bisphosphate carboxylase large chain (448 aa).

Residue Lys4 is modified to N6,N6,N6-trimethyllysine. Residues Asn113 and Thr163 each coordinate substrate. Catalysis depends on Lys165, which acts as the Proton acceptor. Lys167 lines the substrate pocket. Lys191, Asp193, and Glu194 together coordinate Mg(2+). Residue Lys191 is modified to N6-carboxylysine. His284 functions as the Proton acceptor in the catalytic mechanism. Residues Arg285, His317, and Ser369 each coordinate substrate.

It belongs to the RuBisCO large chain family. Type I subfamily. Heterohexadecamer of 8 large chains and 8 small chains; disulfide-linked. The disulfide link is formed within the large subunit homodimers. Mg(2+) serves as cofactor. Post-translationally, the disulfide bond which can form in the large chain dimeric partners within the hexadecamer appears to be associated with oxidative stress and protein turnover.

It is found in the plastid. It localises to the chloroplast. It carries out the reaction 2 (2R)-3-phosphoglycerate + 2 H(+) = D-ribulose 1,5-bisphosphate + CO2 + H2O. The enzyme catalyses D-ribulose 1,5-bisphosphate + O2 = 2-phosphoglycolate + (2R)-3-phosphoglycerate + 2 H(+). In terms of biological role, ruBisCO catalyzes two reactions: the carboxylation of D-ribulose 1,5-bisphosphate, the primary event in carbon dioxide fixation, as well as the oxidative fragmentation of the pentose substrate in the photorespiration process. Both reactions occur simultaneously and in competition at the same active site. The polypeptide is Ribulose bisphosphate carboxylase large chain (Eucryphia lucida (Leatherwood)).